A 385-amino-acid polypeptide reads, in one-letter code: Aldehyde dehydrogenase family 3 member B2 (385 aa).

107–112 serves as a coordination point for NAD(+); it reads GSPRVG. Active-site residues include Glu-129 and Cys-163. Cys-382 is modified (cysteine methyl ester). Cys-382 carries S-geranylgeranyl cysteine lipidation. The propeptide at 383–385 is removed in mature form; that stretch reads TLL.

This sequence belongs to the aldehyde dehydrogenase family. In terms of processing, geranylgeranylation is important for localization to lipid droplets and enzyme activity. In terms of tissue distribution, salivary gland. Expressed at protein level in placenta.

It is found in the lipid droplet. It carries out the reaction an aldehyde + NAD(+) + H2O = a carboxylate + NADH + 2 H(+). The catalysed reaction is a long-chain fatty aldehyde + NAD(+) + H2O = a long-chain fatty acid + NADH + 2 H(+). The enzyme catalyses a medium-chain fatty aldehyde + NAD(+) + H2O = a medium-chain fatty acid + NADH + 2 H(+). It catalyses the reaction hexadecanoate + NADH + 2 H(+) = hexadecanal + NAD(+) + H2O. It carries out the reaction octanal + NAD(+) + H2O = octanoate + NADH + 2 H(+). Its pathway is alcohol metabolism; ethanol degradation; acetate from ethanol: step 2/2. In terms of biological role, oxidizes medium and long chain fatty aldehydes in lipid droplets into non-toxic fatty acids. In Homo sapiens (Human), this protein is Aldehyde dehydrogenase family 3 member B2 (ALDH3B2).